We begin with the raw amino-acid sequence, 485 residues long: MTIKVLSVASEAVPLVKTGGLADVAGALPSAVAPHGVGMTTILPGYPAVMKALARPRALHTWNSLLGEKARLVSGKIDGHPLLVLDAPAFFQRDGTPYVDSSGRDWADNWRRFAAFGRAAADVAGGAVKGRAFDLVHAHDWQAAMALAYLRFAPPPGGRRVPSVMTIHNMAFQGHYGADLFPALGLPPQAWAMDGVEYHGGVGYLKAGLEAASAITTVSPTYAREIRTPEFGMGLEGLVVSRGNRVSGIVNGIDTAQWNPETDPALAARFGVKSLARRVTNKRALEAEFALEADDGPLFVVITRLTWQKGIDVLLECIDHLVGIGGRLALLGSGDKAMENAFHAAATRHPGKVGVRIGYDEALSHRMQAGGDAILVPSRFEPCGLTQLYGLAYGCVPVVARTGGLADTVIDANLAAVMAGVATGVQFEGVNYPSVSDAISRAVTLYRQPDVWRAMQRAGMKTDFSWSRSGKAYADLYAALIAEDQ.

Lys17 is a binding site for ADP-alpha-D-glucose.

This sequence belongs to the glycosyltransferase 1 family. Bacterial/plant glycogen synthase subfamily.

It catalyses the reaction [(1-&gt;4)-alpha-D-glucosyl](n) + ADP-alpha-D-glucose = [(1-&gt;4)-alpha-D-glucosyl](n+1) + ADP + H(+). The protein operates within glycan biosynthesis; glycogen biosynthesis. Its function is as follows. Synthesizes alpha-1,4-glucan chains using ADP-glucose. This is Glycogen synthase from Novosphingobium aromaticivorans (strain ATCC 700278 / DSM 12444 / CCUG 56034 / CIP 105152 / NBRC 16084 / F199).